The sequence spans 113 residues: Nucleoid-associated protein sync_0026 (113 aa).

It belongs to the YbaB/EbfC family. Homodimer.

It localises to the cytoplasm. It is found in the nucleoid. Its function is as follows. Binds to DNA and alters its conformation. May be involved in regulation of gene expression, nucleoid organization and DNA protection. The chain is Nucleoid-associated protein sync_0026 from Synechococcus sp. (strain CC9311).